The sequence spans 293 residues: Small ribosomal subunit biogenesis GTPase RsgA (293 aa).

The 161-residue stretch at 63–223 (KNWLVRPPIA…VADTPGFSAL (161 aa)) folds into the CP-type G domain. GTP-binding positions include 112 to 115 (NKMD) and 166 to 174 (GQSGVGKSS). C247, C252, H254, and C260 together coordinate Zn(2+).

It belongs to the TRAFAC class YlqF/YawG GTPase family. RsgA subfamily. As to quaternary structure, monomer. Associates with 30S ribosomal subunit, binds 16S rRNA. Zn(2+) serves as cofactor.

The protein resides in the cytoplasm. One of several proteins that assist in the late maturation steps of the functional core of the 30S ribosomal subunit. Helps release RbfA from mature subunits. May play a role in the assembly of ribosomal proteins into the subunit. Circularly permuted GTPase that catalyzes slow GTP hydrolysis, GTPase activity is stimulated by the 30S ribosomal subunit. In Geobacillus sp. (strain WCH70), this protein is Small ribosomal subunit biogenesis GTPase RsgA.